The sequence spans 485 residues: 28S rRNA (uridine-N(3))-methyltransferase (485 aa).

Residues Arg-296, Gly-318, and Asn-347 each contribute to the S-adenosyl-L-methionine site.

It belongs to the class IV-like SAM-binding methyltransferase superfamily.

Its subcellular location is the nucleus. The catalysed reaction is uridine in 28S rRNA + S-adenosyl-L-methionine = N(3)-methyluridine in 28S rRNA + S-adenosyl-L-homocysteine + H(+). Functionally, S-adenosyl-L-methionine-dependent methyltransferase that specifically methylates the uridine in position 3485 of 28S rRNA. The sequence is that of 28S rRNA (uridine-N(3))-methyltransferase from Drosophila melanogaster (Fruit fly).